Reading from the N-terminus, the 204-residue chain is Factor arrest protein 3 (204 aa).

As to quaternary structure, component of a complex at least composed of FAR3, FAR7, FAR8, FAR10, FAR11 and VPS64.

Its subcellular location is the endoplasmic reticulum. Functionally, participates in the control of the reentry into the cell cycle following pheromone treatment. This Saccharomyces cerevisiae (strain ATCC 204508 / S288c) (Baker's yeast) protein is Factor arrest protein 3 (FAR3).